Reading from the N-terminus, the 129-residue chain is Small ribosomal subunit protein uS11 (129 aa).

It belongs to the universal ribosomal protein uS11 family. In terms of assembly, part of the 30S ribosomal subunit. Interacts with proteins S7 and S18. Binds to IF-3.

Located on the platform of the 30S subunit, it bridges several disparate RNA helices of the 16S rRNA. Forms part of the Shine-Dalgarno cleft in the 70S ribosome. This chain is Small ribosomal subunit protein uS11, found in Salmonella newport (strain SL254).